Here is a 121-residue protein sequence, read N- to C-terminus: Large ribosomal subunit protein bL12 (121 aa).

This sequence belongs to the bacterial ribosomal protein bL12 family. As to quaternary structure, homodimer. Part of the ribosomal stalk of the 50S ribosomal subunit. Forms a multimeric L10(L12)X complex, where L10 forms an elongated spine to which 2 to 4 L12 dimers bind in a sequential fashion. Binds GTP-bound translation factors.

Functionally, forms part of the ribosomal stalk which helps the ribosome interact with GTP-bound translation factors. Is thus essential for accurate translation. The sequence is that of Large ribosomal subunit protein bL12 from Pseudomonas syringae pv. tomato (strain ATCC BAA-871 / DC3000).